We begin with the raw amino-acid sequence, 288 residues long: Type II restriction enzyme DpnII (288 aa).

This sequence belongs to the DpnII type II restriction endonuclease family. As to quaternary structure, homodimer.

It catalyses the reaction Endonucleolytic cleavage of DNA to give specific double-stranded fragments with terminal 5'-phosphates.. A P subtype restriction enzyme that recognizes the double-stranded unmethylated sequence 5'-GATC-3' and cleaves before G-1. The polypeptide is Type II restriction enzyme DpnII (Streptococcus pneumoniae).